The sequence spans 391 residues: MTMMFDLTQDLVKEILSRVPITSLGAVRSTCKGWNALSKDRILCKAKPKQQFHQGFMLSDYRLRSMRFNISGTFKENGEEFVNLSVKEIGNFLNKVEISHMYYCGGILLCVTTDTRLVIWNPYLGQIRWIQLKTETMYSTFCLRYDNNKNHKILRFLDNKQGSYEIYDLKSYSWRAFDVIPKWDIDDDGQSASVKGNTYFRTIDETPNLLICFDFTAERFGKLLDPPFQHGWMSLSWVREEKLVALYQHLDTSMIEIWITTKIEPNALSWTSFLKCYIEQLIALDFWFDIDYNNFFIDEEKKLAVVIDKVESEDCKRSNSHINSYIIGDDGYLKKMNSLGNTARSYTAIMLSSCYVSSLVQIDDPIARRRRRERNSKRKEKKRKGTTNNKV.

The region spanning 2–49 (TMMFDLTQDLVKEILSRVPITSLGAVRSTCKGWNALSKDRILCKAKPK) is the F-box domain. Kelch repeat units follow at residues 100 to 143 (HMYY…TFCL) and 144 to 194 (RYDN…SASV). Over residues 369–385 (RRRRERNSKRKEKKRKG) the composition is skewed to basic residues. Residues 369 to 391 (RRRRERNSKRKEKKRKGTTNNKV) are disordered.

The polypeptide is F-box/kelch-repeat protein At4g05080 (Arabidopsis thaliana (Mouse-ear cress)).